A 399-amino-acid polypeptide reads, in one-letter code: Ribonuclease T2-like 1-A (399 aa).

Residues 1–17 (MLSILSIAALLIATVQA) form the signal peptide. Cystine bridges form between C24-C43, C32-C79, C42-C150, C87-C142, and C214-C249. Residues H72, E135, and H139 contribute to the active site. The interval 259-279 (KGNSGANTLTTKTTGTTTSGS) is disordered. The segment covering 262 to 279 (SGANTLTTKTTGTTTSGS) has biased composition (low complexity). The N-linked (GlcNAc...) asparagine glycan is linked to N291.

It belongs to the RNase T2 family.

It is found in the vacuole lumen. The protein resides in the cytoplasm. The enzyme catalyses a ribonucleotidyl-ribonucleotide-RNA + H2O = a 3'-end 3'-phospho-ribonucleotide-RNA + a 5'-end dephospho-ribonucleoside-RNA + H(+). Rnase which modulates cell survival under stress conditions. Released from the vacuole to the cytoplasm during stress to promote tRNA and rRNA cleavage and to activate separately a downstream pathway that promotes cell death. Involved in cell size, vacuolar morphology and growth at high temperatures and high salt concentration. In Candida albicans (strain SC5314 / ATCC MYA-2876) (Yeast), this protein is Ribonuclease T2-like 1-A (RNY1-A).